The following is a 316-amino-acid chain: tRNA dimethylallyltransferase (316 aa).

17–24 contributes to the ATP binding site; sequence GPTASGKT. 19 to 24 provides a ligand contact to substrate; the sequence is TASGKT. Interaction with substrate tRNA regions lie at residues 42–45, 166–170, 247–252, and 280–287; these read DSAL, QRLSR, RCVGYR, and KRQITWLR.

The protein belongs to the IPP transferase family. Monomer. Requires Mg(2+) as cofactor.

It carries out the reaction adenosine(37) in tRNA + dimethylallyl diphosphate = N(6)-dimethylallyladenosine(37) in tRNA + diphosphate. In terms of biological role, catalyzes the transfer of a dimethylallyl group onto the adenine at position 37 in tRNAs that read codons beginning with uridine, leading to the formation of N6-(dimethylallyl)adenosine (i(6)A). In Enterobacter sp. (strain 638), this protein is tRNA dimethylallyltransferase.